Reading from the N-terminus, the 951-residue chain is Protein inturned (951 aa).

3 disordered regions span residues 1–32 (MEHS…FSSS), 189–208 (SSRN…NQRL), and 687–765 (TPKR…GGSG). The PDZ domain maps to 187-269 (HQSSRNSKRS…PMQLKLTFET (83 aa)). Residues 715-726 (PTRSSGGSDSGT) are compositionally biased toward low complexity. The segment covering 743-752 (MARKFGRRES) has biased composition (basic and acidic residues). The span at 754-765 (GSGGSDGSGGSG) shows a compositional bias: gly residues.

Belongs to the inturned family. In terms of assembly, interacts with fuz and wdpcp; fuz, intu and wdpcp probably form the core CPLANE (ciliogenesis and planar polarity effectors) complex. As to expression, expressed in the neural plate during neural tube closure with subsequent strong expression in the ventral neural tube and in facial mesenchyme.

It localises to the cell surface. Its subcellular location is the cell membrane. The protein resides in the cytoplasm. It is found in the cytoskeleton. The protein localises to the cilium basal body. Plays a role in the definition of cell polarity via the planar cell polarity (PCP) cascade. Required for ciliogenesis by controlling the organization of the apical actin cytoskeleton and the positioning of the basal bodies at the apical cell surface, which in turn is essential for the normal orientation of elongating ciliary microtubules. Proposed to function as core component of a functional module called CPLANE (ciliogenesis and planar polarity effectors) involved in recruitment of peripheral IFT-A proteins to basal bodies. Controls the localization of both rhoa and disheveled in multi-ciliated cells. Has an indirect effect on hedgehog signaling. This chain is Protein inturned, found in Xenopus laevis (African clawed frog).